A 376-amino-acid chain; its full sequence is MKNSIPIDLIIEIVSRSTAKSVARCHCVSKQWRAIFRRKYFIELFLTRSKARPRILFVVQDGEWSEWSFLSLPQPQNSSLVVESADIHMKKFSAGISGSIYFTYASGLIYFKCMRIPKEDEDEKPVLCDPLTGKYVILPEPRVFGMYSYLGFDPVDKEFKVLFMASGYTASKDVDHYILTLRTGELKWRTIQCPFTHEPLWTRICINGVLYYSAMNSDGNYVIVCFDVRYEKFKLVDTKCRSEFNGLINYKGKLCGVKLKYAYRVGFPVKLRMRVLEDVEKDEWSTYVKVKVKQNLSVAGMTATGDIVLFMKFASNPFYVFYFNPERNSLEVQSVEIQGLGANPDRIACNAFVDYVEDLSVNDAMLQLNSIPLQQD.

The F-box domain maps to 1–44; the sequence is MKNSIPIDLIIEIVSRSTAKSVARCHCVSKQWRAIFRRKYFIEL.

This chain is Putative F-box protein At1g30930, found in Arabidopsis thaliana (Mouse-ear cress).